A 98-amino-acid polypeptide reads, in one-letter code: MPRDKKLVHRATSDVEDEDNDQREEEWSDNDQPSTKDDTAAPTETGLEPSSASNGHSQPAIVAALEQERRQHLESIILKRTLYLQQQRQKQQEGTNRP.

A disordered region spans residues 1 to 63 (MPRDKKLVHR…NGHSQPAIVA (63 aa)). The segment covering 14–29 (DVEDEDNDQREEEWSD) has biased composition (acidic residues). Polar residues predominate over residues 48–57 (EPSSASNGHS).

This is an uncharacterized protein from Aedes vexans (Inland floodwater mosquito).